The following is a 360-amino-acid chain: Phospho-N-acetylmuramoyl-pentapeptide-transferase (360 aa).

The next 10 membrane-spanning stretches (helical) occupy residues 26-46, 74-94, 97-117, 134-154, 168-188, 199-219, 236-256, 263-283, 288-308, and 338-358; these read AILG…KLIE, MGGL…GDLG, YVWV…IDDY, YILQ…TAAN, VMPQ…VGSS, GLAI…AYLS, SGEL…FLWF, VFMG…IAVL, ILLV…ILQV, and VIVR…ATLK.

This sequence belongs to the glycosyltransferase 4 family. MraY subfamily. Mg(2+) serves as cofactor.

The protein localises to the cell inner membrane. It catalyses the reaction UDP-N-acetyl-alpha-D-muramoyl-L-alanyl-gamma-D-glutamyl-meso-2,6-diaminopimeloyl-D-alanyl-D-alanine + di-trans,octa-cis-undecaprenyl phosphate = di-trans,octa-cis-undecaprenyl diphospho-N-acetyl-alpha-D-muramoyl-L-alanyl-D-glutamyl-meso-2,6-diaminopimeloyl-D-alanyl-D-alanine + UMP. It functions in the pathway cell wall biogenesis; peptidoglycan biosynthesis. Catalyzes the initial step of the lipid cycle reactions in the biosynthesis of the cell wall peptidoglycan: transfers peptidoglycan precursor phospho-MurNAc-pentapeptide from UDP-MurNAc-pentapeptide onto the lipid carrier undecaprenyl phosphate, yielding undecaprenyl-pyrophosphoryl-MurNAc-pentapeptide, known as lipid I. This chain is Phospho-N-acetylmuramoyl-pentapeptide-transferase, found in Shewanella oneidensis (strain ATCC 700550 / JCM 31522 / CIP 106686 / LMG 19005 / NCIMB 14063 / MR-1).